We begin with the raw amino-acid sequence, 166 residues long: Anterior gradient protein 3 (166 aa).

A signal peptide spans 1–21 (MMLHSALGLCLLLVTVSSNLA). A Prevents secretion from ER motif is present at residues 163-166 (QSEL).

The protein belongs to the AGR family. Interacts with LYPD3 and DAG1 (alphaDAG1). As to expression, expressed in the lung, in the ciliated cells of the airway epithelium. Expression increased with differentiation of airway epithelial cells. Not detected in the mucous cells. Expressed in ciliated cells in the oviduct. Also detected in stomach, colon, prostate and liver. Expressed in breast, ovary, prostate and liver cancer. Expression is associated with the level of differentiation of breast cancer (at protein level).

The protein resides in the endoplasmic reticulum. Functionally, required for calcium-mediated regulation of ciliary beat frequency and mucociliary clearance in the airway. Might be involved in the regulation of intracellular calcium in tracheal epithelial cells. The polypeptide is Anterior gradient protein 3 (AGR3) (Homo sapiens (Human)).